The primary structure comprises 287 residues: Spermidine/putrescine transport system permease protein PotB (287 aa).

The Cytoplasmic portion of the chain corresponds to 1–10; that stretch reads MKNTSKFQNV. The helical transmembrane segment at 11–31 threads the bilayer; it reads VIVTIVGWLVLFVFLPNLMII. Residues 32–70 lie on the Periplasmic side of the membrane; it reads GTSFLTRDDASFVKMVFTLDNYARLLDPLYFEVLLHSLN. Residues 65 to 271 form the ABC transmembrane type-1 domain; the sequence is LLHSLNMALI…IVMGLMLLIY (207 aa). Residues 71 to 91 form a helical membrane-spanning segment; it reads MALIATLSCLVLGYPFAWFLA. Residues 92 to 99 lie on the Cytoplasmic side of the membrane; it reads KLPEKIRP. The chain crosses the membrane as a helical span at residues 100 to 120; sequence LLLFLLIVPFWTNSLIRIYGL. Topologically, residues 121–145 are periplasmic; that stretch reads KIFLSTKGYLNEFLLWLGVIDTPIR. The helical transmembrane segment at 146-166 threads the bilayer; it reads IMFTPSAVIIGLVYILLPFMV. Residues 167-197 are Cytoplasmic-facing; sequence MPLYSSIEKLDKPLLEAARDLGASKMQTFIR. The helical transmembrane segment at 198 to 218 threads the bilayer; that stretch reads IIIPLTMPGIVAGCLLVMLPA. The Periplasmic segment spans residues 219–251; it reads MGLFYVSDLMGGAKNLLIGNVIKVQFLNIRDWP. Residues 252-272 traverse the membrane as a helical segment; the sequence is FGAATSITLTIVMGLMLLIYW. At 273-287 the chain is on the cytoplasmic side; the sequence is RASRLLNKKVSDISD.

This sequence belongs to the binding-protein-dependent transport system permease family. CysTW subfamily.

The protein resides in the cell inner membrane. Functionally, required for the activity of the bacterial periplasmic transport system of putrescine and spermidine. This is Spermidine/putrescine transport system permease protein PotB (potB) from Salmonella typhi.